The following is a 432-amino-acid chain: Glutamate-1-semialdehyde 2,1-aminomutase (432 aa).

Lys265 is subject to N6-(pyridoxal phosphate)lysine.

Belongs to the class-III pyridoxal-phosphate-dependent aminotransferase family. HemL subfamily. Homodimer. It depends on pyridoxal 5'-phosphate as a cofactor.

Its subcellular location is the cytoplasm. The enzyme catalyses (S)-4-amino-5-oxopentanoate = 5-aminolevulinate. It functions in the pathway porphyrin-containing compound metabolism; protoporphyrin-IX biosynthesis; 5-aminolevulinate from L-glutamyl-tRNA(Glu): step 2/2. This Histophilus somni (strain 129Pt) (Haemophilus somnus) protein is Glutamate-1-semialdehyde 2,1-aminomutase.